A 122-amino-acid chain; its full sequence is Ribosome-binding factor A (122 aa).

Belongs to the RbfA family. As to quaternary structure, monomer. Binds 30S ribosomal subunits, but not 50S ribosomal subunits or 70S ribosomes.

The protein localises to the cytoplasm. In terms of biological role, one of several proteins that assist in the late maturation steps of the functional core of the 30S ribosomal subunit. Associates with free 30S ribosomal subunits (but not with 30S subunits that are part of 70S ribosomes or polysomes). Required for efficient processing of 16S rRNA. May interact with the 5'-terminal helix region of 16S rRNA. This is Ribosome-binding factor A from Polynucleobacter necessarius subsp. necessarius (strain STIR1).